The sequence spans 119 residues: Platelet basic protein (119 aa).

An N-terminal signal peptide occupies residues 1 to 33; that stretch reads MSLRLGAISSCTTSSPFPVLQVLLPLSLLLTTL. The propeptide occupies 34–39; it reads VPATMG. 2 cysteine pairs are disulfide-bonded: Cys-54–Cys-80 and Cys-56–Cys-96.

Its subcellular location is the secreted. In terms of biological role, chemoattractant factor for neutrophils. The chain is Platelet basic protein (PPBP) from Sus scrofa (Pig).